The chain runs to 205 residues: Small ribosomal subunit protein uS4 (205 aa).

Positions 18-46 are disordered; the sequence is NIWGRPKSPVNRREYGPGQHGQRRKGKLS. An S4 RNA-binding domain is found at 94 to 157; it reads RRLDTVVYRA…KQLAFVLEAS (64 aa).

The protein belongs to the universal ribosomal protein uS4 family. As to quaternary structure, part of the 30S ribosomal subunit. Contacts protein S5. The interaction surface between S4 and S5 is involved in control of translational fidelity.

Functionally, one of the primary rRNA binding proteins, it binds directly to 16S rRNA where it nucleates assembly of the body of the 30S subunit. With S5 and S12 plays an important role in translational accuracy. The sequence is that of Small ribosomal subunit protein uS4 from Rhodopseudomonas palustris (strain HaA2).